The sequence spans 452 residues: Cell division protein FtsZ (452 aa).

GTP contacts are provided by residues 24–28 (GAGSN), 111–113 (GTG), glutamate 142, arginine 146, and aspartate 190.

Belongs to the FtsZ family. As to quaternary structure, homodimer. Polymerizes to form a dynamic ring structure in a strictly GTP-dependent manner. Interacts directly with several other division proteins.

Its subcellular location is the cytoplasm. In terms of biological role, essential cell division protein that forms a contractile ring structure (Z ring) at the future cell division site. The regulation of the ring assembly controls the timing and the location of cell division. One of the functions of the FtsZ ring is to recruit other cell division proteins to the septum to produce a new cell wall between the dividing cells. Binds GTP and shows GTPase activity. This Rickettsia typhi (strain ATCC VR-144 / Wilmington) protein is Cell division protein FtsZ.